A 95-amino-acid polypeptide reads, in one-letter code: Aspartyl/glutamyl-tRNA(Asn/Gln) amidotransferase subunit C (95 aa).

The protein belongs to the GatC family. In terms of assembly, heterotrimer of A, B and C subunits.

It catalyses the reaction L-glutamyl-tRNA(Gln) + L-glutamine + ATP + H2O = L-glutaminyl-tRNA(Gln) + L-glutamate + ADP + phosphate + H(+). The enzyme catalyses L-aspartyl-tRNA(Asn) + L-glutamine + ATP + H2O = L-asparaginyl-tRNA(Asn) + L-glutamate + ADP + phosphate + 2 H(+). Functionally, allows the formation of correctly charged Asn-tRNA(Asn) or Gln-tRNA(Gln) through the transamidation of misacylated Asp-tRNA(Asn) or Glu-tRNA(Gln) in organisms which lack either or both of asparaginyl-tRNA or glutaminyl-tRNA synthetases. The reaction takes place in the presence of glutamine and ATP through an activated phospho-Asp-tRNA(Asn) or phospho-Glu-tRNA(Gln). The chain is Aspartyl/glutamyl-tRNA(Asn/Gln) amidotransferase subunit C from Chloroherpeton thalassium (strain ATCC 35110 / GB-78).